The following is a 229-amino-acid chain: Large ribosomal subunit protein uL1 (229 aa).

The protein belongs to the universal ribosomal protein uL1 family. As to quaternary structure, part of the 50S ribosomal subunit.

In terms of biological role, binds directly to 23S rRNA. The L1 stalk is quite mobile in the ribosome, and is involved in E site tRNA release. Protein L1 is also a translational repressor protein, it controls the translation of the L11 operon by binding to its mRNA. The polypeptide is Large ribosomal subunit protein uL1 (Chlorobium luteolum (strain DSM 273 / BCRC 81028 / 2530) (Pelodictyon luteolum)).